Here is a 356-residue protein sequence, read N- to C-terminus: Uroporphyrinogen decarboxylase (356 aa).

Substrate is bound by residues 27–31 (RQAGR), D77, Y154, T209, and H327.

Belongs to the uroporphyrinogen decarboxylase family. In terms of assembly, homodimer.

The protein resides in the cytoplasm. It carries out the reaction uroporphyrinogen III + 4 H(+) = coproporphyrinogen III + 4 CO2. Its pathway is porphyrin-containing compound metabolism; protoporphyrin-IX biosynthesis; coproporphyrinogen-III from 5-aminolevulinate: step 4/4. Its function is as follows. Catalyzes the decarboxylation of four acetate groups of uroporphyrinogen-III to yield coproporphyrinogen-III. In Cellvibrio japonicus (strain Ueda107) (Pseudomonas fluorescens subsp. cellulosa), this protein is Uroporphyrinogen decarboxylase.